Consider the following 513-residue polypeptide: uncharacterized protein (513 aa).

This sequence belongs to the NodU/CmcH family.

This is an uncharacterized protein from Methanocaldococcus jannaschii (strain ATCC 43067 / DSM 2661 / JAL-1 / JCM 10045 / NBRC 100440) (Methanococcus jannaschii).